Here is a 344-residue protein sequence, read N- to C-terminus: N,N-dimethyltransferase OxyT (344 aa).

S-adenosyl-L-methionine contacts are provided by residues D205 and 231 to 233 (GDF).

It belongs to the class I-like SAM-binding methyltransferase superfamily. Cation-independent O-methyltransferase family.

The catalysed reaction is 4-amino-4-dedimethylamino-anhydrotetracycline + S-adenosyl-L-methionine = 4-methylamino-4-dedimethylamino-anhydrotetracycline + S-adenosyl-L-homocysteine + H(+). It carries out the reaction 4-methylamino-4-dedimethylamino-anhydrotetracycline + S-adenosyl-L-methionine = anhydrotetracycline + S-adenosyl-L-homocysteine + H(+). It participates in antibiotic biosynthesis; oxytetracycline biosynthesis. In terms of biological role, involved in the biosynthesis of the tetracycline antibiotic, oxytetracycline. Catalyzes the dimethylation of 4-amino-4-de(dimethylamino)anhydrotetracycline (4-amino-ATC) to yield anhydrotetracycline (ATC). Also able to catalyze the dimethylation of 7-chloro-, 6-demethyl-, 2-decarboxamido-2-nitrile-, and 4-methylamino-derivatives of 4-amino-4-de(dimethylamino)anhydrotetracycline. This chain is N,N-dimethyltransferase OxyT, found in Streptomyces rimosus.